A 255-amino-acid chain; its full sequence is Diphthine--ammonia ligase (255 aa).

This sequence belongs to the Diphthine--ammonia ligase family.

It carries out the reaction diphthine-[translation elongation factor 2] + NH4(+) + ATP = diphthamide-[translation elongation factor 2] + AMP + diphosphate + H(+). It participates in protein modification; peptidyl-diphthamide biosynthesis. Amidase that catalyzes the last step of diphthamide biosynthesis using ammonium and ATP. Diphthamide biosynthesis consists in the conversion of an L-histidine residue in the translation elongation factor eEF-2 (EEF2) to diphthamide. This is Diphthine--ammonia ligase (dph6) from Danio rerio (Zebrafish).